A 325-amino-acid polypeptide reads, in one-letter code: N-acetyl-gamma-glutamyl-phosphate reductase (325 aa).

The active site involves C135.

It belongs to the NAGSA dehydrogenase family. Type 1 subfamily.

It localises to the cytoplasm. The enzyme catalyses N-acetyl-L-glutamate 5-semialdehyde + phosphate + NADP(+) = N-acetyl-L-glutamyl 5-phosphate + NADPH + H(+). It functions in the pathway amino-acid biosynthesis; L-arginine biosynthesis; N(2)-acetyl-L-ornithine from L-glutamate: step 3/4. In terms of biological role, catalyzes the NADPH-dependent reduction of N-acetyl-5-glutamyl phosphate to yield N-acetyl-L-glutamate 5-semialdehyde. The sequence is that of N-acetyl-gamma-glutamyl-phosphate reductase from Flavobacterium johnsoniae (strain ATCC 17061 / DSM 2064 / JCM 8514 / BCRC 14874 / CCUG 350202 / NBRC 14942 / NCIMB 11054 / UW101) (Cytophaga johnsonae).